The primary structure comprises 105 residues: uncharacterized protein (105 aa).

This is an uncharacterized protein from Archaeoglobus fulgidus (strain ATCC 49558 / DSM 4304 / JCM 9628 / NBRC 100126 / VC-16).